Here is a 435-residue protein sequence, read N- to C-terminus: Adenylosuccinate synthetase (435 aa).

Residues 17–23 and 45–47 contribute to the GTP site; these read GDEGKGK and GHT. Asp18 serves as the catalytic Proton acceptor. Mg(2+) contacts are provided by Asp18 and Gly45. IMP is bound by residues 18–21, 43–46, Thr134, Arg148, Gln229, Thr244, and Arg308; these read DEGK and NAGH. The active-site Proton donor is His46. 304-310 is a binding site for substrate; the sequence is SVTGRPR. GTP contacts are provided by residues Arg310, 336 to 338, and 418 to 420; these read KLD and STG.

It belongs to the adenylosuccinate synthetase family. Homodimer. Mg(2+) serves as cofactor.

It is found in the cytoplasm. The enzyme catalyses IMP + L-aspartate + GTP = N(6)-(1,2-dicarboxyethyl)-AMP + GDP + phosphate + 2 H(+). The protein operates within purine metabolism; AMP biosynthesis via de novo pathway; AMP from IMP: step 1/2. In terms of biological role, plays an important role in the de novo pathway of purine nucleotide biosynthesis. Catalyzes the first committed step in the biosynthesis of AMP from IMP. This chain is Adenylosuccinate synthetase, found in Bordetella pertussis (strain Tohama I / ATCC BAA-589 / NCTC 13251).